The sequence spans 617 residues: KIF-binding protein (617 aa).

The segment at 48–83 is disordered; sequence ALLGPAPEDDDERAADDGPVDQALGAGEPRDAEGPG. Phosphoserine is present on serine 174.

Belongs to the KIF-binding protein family. As to quaternary structure, interacts with KIF1B; positively regulates KIF1B microtubule motor activity. Interacts with STMN2.

Its subcellular location is the cytoplasm. It is found in the cytoskeleton. Its function is as follows. Activator of KIF1B plus-end-directed microtubule motor activity. Required for organization of axonal microtubules, and axonal outgrowth and maintenance during peripheral and central nervous system development. The polypeptide is KIF-binding protein (Kifbp) (Rattus norvegicus (Rat)).